A 1007-amino-acid polypeptide reads, in one-letter code: Calmodulin-binding transcription activator 1 (1007 aa).

Residues 18–144 (MEQLLSEAQH…YLEVKGNRTS (127 aa)) constitute a DNA-binding region (CG-1). Over residues 148–164 (KENNSNSVNGTASVNID) the composition is skewed to polar residues. The tract at residues 148–227 (KENNSNSVNG…VHGNRVRESD (80 aa)) is disordered. A compositionally biased stretch (low complexity) spans 165–176 (STASPTSTLSSL). Polar residues predominate over residues 183–202 (GDSQQASSVLRPSPEPQTGN). A transcription activation region spans residues 233–398 (DVRALDTVGN…TVECETAAAG (166 aa)). ANK repeat units lie at residues 612–641 (DGQG…NINF) and 645–674 (NGWS…DAGA). IQ domains lie at 821–850 (LSCA…RIVK) and 844–873 (IRQR…SVGL). Residues 869–891 (WSVGLLEKIILRWRRKGNGLRGF) are calmodulin-binding. Residues 915 to 943 (QEDEYDYLKEGRKQTEERLQKALTRVKSM) are a coiled coil. Ser942 is subject to Phosphoserine.

Belongs to the CAMTA family. As to expression, expressed in roots, stems, leaves, pollen and siliques.

It localises to the nucleus. Transcription activator that binds calmodulin in a calcium-dependent manner in vitro. Binds to the DNA consensus sequence 5'-[ACG]CGCG[GTC]-3'. Regulates transcriptional activity in response to calcium signals. Involved in freezing tolerance. Involved in freezing tolerance in association with CAMTA2 and CAMTA3. Contributes together with CAMTA2 and CAMTA3 to the positive regulation of the cold-induced expression of DREB1A/CBF3, DREB1B/CBF1 and DREB1C/CBF2. Involved in drought stress responses by regulating several drought-responsive genes. Involved in auxin signaling and responses to abiotic stresses. Activates the expression of the V-PPase proton pump AVP1 in pollen. The chain is Calmodulin-binding transcription activator 1 from Arabidopsis thaliana (Mouse-ear cress).